Reading from the N-terminus, the 227-residue chain is MANYYEVLGVQSSASPEDIKKAYRKLALRWHPDKNPDNKEEAEKKFKQVSEAYEVLSDSKKRSVYDRAGCDRWRAGGGANVPHSSPFGAGYPFRNPEDIFREFFGGLDPFSFEFWDTPFSGRGRPHGLHRVFPSGFGEFPAFMEALSSFNTLGHGGGSRSTFSSASFGGSGSSGFKSVMSSTEMVNGRKVTTKRIIENGQERVEVEEDGQLRSVTVNGKEKLMRVDK.

The J domain occupies 3–69; sequence NYYEVLGVQS…KKRSVYDRAG (67 aa).

In terms of assembly, interacts with histone deacetylases HDAC4, HDAC6, and SIRT2, HDAC activity is required for antiaggregation.

Efficient suppressor of aggregation and toxicity of disease-associated polyglutamine proteins. This Mus musculus (Mouse) protein is DnaJ homolog subfamily B member 8 (Dnajb8).